The following is a 51-amino-acid chain: Large ribosomal subunit protein bL33 (51 aa).

This sequence belongs to the bacterial ribosomal protein bL33 family.

The sequence is that of Large ribosomal subunit protein bL33 from Psychrobacter arcticus (strain DSM 17307 / VKM B-2377 / 273-4).